Consider the following 104-residue polypeptide: Putative membrane protein insertion efficiency factor (104 aa).

Residues 83 to 104 form a disordered region; it reads SSPTPLAESPDDRTVPHTQETS.

This sequence belongs to the UPF0161 family.

It localises to the cell inner membrane. Functionally, could be involved in insertion of integral membrane proteins into the membrane. The polypeptide is Putative membrane protein insertion efficiency factor (Chlamydia trachomatis serovar D (strain ATCC VR-885 / DSM 19411 / UW-3/Cx)).